Reading from the N-terminus, the 130-residue chain is Small ribosomal subunit protein uS9 (130 aa).

The interval 107-130 is disordered; that stretch reads DARMKERKKPGLKKARKASQFSKR. The span at 111–130 shows a compositional bias: basic residues; it reads KERKKPGLKKARKASQFSKR.

Belongs to the universal ribosomal protein uS9 family.

This chain is Small ribosomal subunit protein uS9, found in Ligilactobacillus salivarius (strain UCC118) (Lactobacillus salivarius).